We begin with the raw amino-acid sequence, 388 residues long: Deoxyuridine 5'-triphosphate nucleotidohydrolase (388 aa).

Residues 77–88 (EEKYDKEQHPGE) show a composition bias toward basic and acidic residues. 2 disordered regions span residues 77-96 (EEKY…SPLP) and 336-388 (THTP…PRHP). Residues 351–363 (VDDDVDETEEDEK) are compositionally biased toward acidic residues.

The protein belongs to the dUTPase family. Requires Mg(2+) as cofactor.

It localises to the virion. The enzyme catalyses dUTP + H2O = dUMP + diphosphate + H(+). It functions in the pathway pyrimidine metabolism; dUMP biosynthesis; dUMP from dCTP (dUTP route): step 2/2. Functionally, involved in nucleotide metabolism: produces dUMP, the immediate precursor of thymidine nucleotides and decreases the intracellular concentration of dUTP to avoid uracil incorporation into viral DNA. This is Deoxyuridine 5'-triphosphate nucleotidohydrolase from Human cytomegalovirus (strain AD169) (HHV-5).